Here is a 130-residue protein sequence, read N- to C-terminus: Sulfurtransferase TusD (130 aa).

The active-site Cysteine persulfide intermediate is the Cys-80.

This sequence belongs to the DsrE/TusD family. In terms of assembly, heterohexamer, formed by a dimer of trimers. The hexameric TusBCD complex contains 2 copies each of TusB, TusC and TusD. The TusBCD complex interacts with TusE.

The protein resides in the cytoplasm. Part of a sulfur-relay system required for 2-thiolation of 5-methylaminomethyl-2-thiouridine (mnm(5)s(2)U) at tRNA wobble positions. Accepts sulfur from TusA and transfers it in turn to TusE. The sequence is that of Sulfurtransferase TusD from Proteus mirabilis (strain HI4320).